Here is a 251-residue protein sequence, read N- to C-terminus: tRNA (guanine-N(1)-)-methyltransferase (251 aa).

Residues Gly114 and Ile134–Leu139 each bind S-adenosyl-L-methionine.

It belongs to the RNA methyltransferase TrmD family. As to quaternary structure, homodimer.

It localises to the cytoplasm. It carries out the reaction guanosine(37) in tRNA + S-adenosyl-L-methionine = N(1)-methylguanosine(37) in tRNA + S-adenosyl-L-homocysteine + H(+). In terms of biological role, specifically methylates guanosine-37 in various tRNAs. This is tRNA (guanine-N(1)-)-methyltransferase from Pelotomaculum thermopropionicum (strain DSM 13744 / JCM 10971 / SI).